Reading from the N-terminus, the 162-residue chain is Phosphopantetheine adenylyltransferase (162 aa).

Substrate is bound at residue Ser-9. Residues 9 to 10 and His-17 contribute to the ATP site; that span reads SF. Substrate contacts are provided by Lys-41, Ile-77, and Lys-91. ATP is bound by residues 92–94, Glu-102, and 126–132; these read GLR and YAFLSSS.

This sequence belongs to the bacterial CoaD family. In terms of assembly, homohexamer. Mg(2+) serves as cofactor.

It localises to the cytoplasm. It carries out the reaction (R)-4'-phosphopantetheine + ATP + H(+) = 3'-dephospho-CoA + diphosphate. It functions in the pathway cofactor biosynthesis; coenzyme A biosynthesis; CoA from (R)-pantothenate: step 4/5. In terms of biological role, reversibly transfers an adenylyl group from ATP to 4'-phosphopantetheine, yielding dephospho-CoA (dPCoA) and pyrophosphate. The polypeptide is Phosphopantetheine adenylyltransferase (Frankia casuarinae (strain DSM 45818 / CECT 9043 / HFP020203 / CcI3)).